Here is a 133-residue protein sequence, read N- to C-terminus: C-C motif chemokine 21b (133 aa).

Residues 1 to 23 form the signal peptide; it reads MAQMMTLSLLSLVLALCIPWTQG. Cystine bridges form between C31–C57, C32–C75, and C103–C122. The segment at 87–133 is disordered; the sequence is MRRLDQPPAPGKQSPGCRKNRGTSKSGKKGKGSKGCKRTEQTQPSRG. The tract at residues 98–133 is C-terminal basic extension; it reads KQSPGCRKNRGTSKSGKKGKGSKGCKRTEQTQPSRG. The segment covering 104 to 122 has biased composition (basic residues); it reads RKNRGTSKSGKKGKGSKGC.

This sequence belongs to the intercrine beta (chemokine CC) family. As to quaternary structure, binds to CCR7 and to CXCR3. Interacts with PDPN; relocalizes PDPN to the basolateral membrane. Interacts with GPR174. In terms of tissue distribution, expressed strongly in lung, spleen, thymus, peripheral and mesentric lymph nodes. Also expressed in the testis, kidney, liver, and heart.

The protein localises to the secreted. In terms of biological role, inhibits hemopoiesis and stimulates chemotaxis. Chemotactic in vitro for thymocytes and activated T-cells, but not for B-cells, macrophages, or neutrophils. Potent mesangial cell chemoattractant. Shows preferential activity towards naive T-cells. May play a role in mediating homing of lymphocytes to secondary lymphoid organs. This is C-C motif chemokine 21b (Ccl21b) from Mus musculus (Mouse).